A 191-amino-acid chain; its full sequence is Peptidyl-tRNA hydrolase (191 aa).

Tyr14 lines the tRNA pocket. His19 serves as the catalytic Proton acceptor. The tRNA site is built by Phe64, Asn66, and Asn112.

This sequence belongs to the PTH family. As to quaternary structure, monomer.

It is found in the cytoplasm. It carries out the reaction an N-acyl-L-alpha-aminoacyl-tRNA + H2O = an N-acyl-L-amino acid + a tRNA + H(+). Its function is as follows. Hydrolyzes ribosome-free peptidyl-tRNAs (with 1 or more amino acids incorporated), which drop off the ribosome during protein synthesis, or as a result of ribosome stalling. Catalyzes the release of premature peptidyl moieties from peptidyl-tRNA molecules trapped in stalled 50S ribosomal subunits, and thus maintains levels of free tRNAs and 50S ribosomes. The sequence is that of Peptidyl-tRNA hydrolase from Novosphingobium aromaticivorans (strain ATCC 700278 / DSM 12444 / CCUG 56034 / CIP 105152 / NBRC 16084 / F199).